A 1266-amino-acid polypeptide reads, in one-letter code: Neuronal-glial cell adhesion molecule (1266 aa).

Positions 1 to 20 (MALPMVGLLLLLLLGGPGAA) are cleaved as a signal peptide. The Extracellular portion of the chain corresponds to 21–1130 (ITIPPEYGAH…PQPGGGVCTK (1110 aa)). Ig-like C2-type domains lie at 36–128 (PELT…NVIA), 135–221 (PKEK…KEPL), 236–322 (PRLL…HSVT), 327–413 (PYWV…AFLH), 418–506 (PLRM…ALLE), and 510–597 (PTRI…AQLR). 4 disulfide bridges follow: cysteine 58-cysteine 110, cysteine 154-cysteine 205, cysteine 260-cysteine 306, and cysteine 348-cysteine 397. Asparagine 97 carries N-linked (GlcNAc...) asparagine glycosylation. N-linked (GlcNAc...) asparagine glycans are attached at residues asparagine 288, asparagine 390, asparagine 434, asparagine 472, and asparagine 498. Cysteine 441 and cysteine 490 are oxidised to a cystine. Residues cysteine 532 and cysteine 581 are joined by a disulfide bond. Fibronectin type-III domains are found at residues 603 to 698 (PSRD…TPPA), 700 to 804 (PERN…SGED), 809 to 930 (YPEN…TPEG), 934 to 1021 (PPEE…TKPE), and 1022 to 1118 (PPSP…TNGT). The disordered stretch occupies residues 685 to 710 (EHHAPSAPIETPPAAPERNPGGVHGE). 2 N-linked (GlcNAc...) asparagine glycosylation sites follow: asparagine 712 and asparagine 819. The interval 857–882 (SRRQAPPDPPQIPQSPAEDPPPFPPV) is disordered. The segment covering 862 to 881 (PPDPPQIPQSPAEDPPPFPP) has biased composition (pro residues). The Cell attachment site motif lies at 914 to 916 (RGD). The interval 1004-1025 (STPRERPALQTVGSTKPEPPSP) is disordered. N-linked (GlcNAc...) asparagine glycosylation is found at asparagine 1061, asparagine 1075, asparagine 1100, and asparagine 1116. Residues 1131–1153 (GWFIGFVSSVVLLLLILLILCFI) form a helical membrane-spanning segment. Topologically, residues 1154-1266 (KRSKGGKYSV…ASPCAGPPLD (113 aa)) are cytoplasmic. Residues 1163 to 1195 (VKDKEDTQVDSEARPMKDETFGEYRSLESEAEK) show a composition bias toward basic and acidic residues. The segment at 1163–1266 (VKDKEDTQVD…ASPCAGPPLD (104 aa)) is disordered. The span at 1199–1211 (SGSGAGSGVGSPG) shows a compositional bias: gly residues.

This sequence belongs to the immunoglobulin superfamily. L1/neurofascin/NgCAM family. In terms of assembly, binds to itself and to axonin 1. Brain.

The protein localises to the cell membrane. Functionally, mediates the adhesion of neurons to neurons and neurons to glia. It is involved in neuronal migration, neurite fasciculation and outgrowth. The chain is Neuronal-glial cell adhesion molecule from Gallus gallus (Chicken).